Consider the following 85-residue polypeptide: Cell division topological specificity factor (85 aa).

This sequence belongs to the MinE family.

Prevents the cell division inhibition by proteins MinC and MinD at internal division sites while permitting inhibition at polar sites. This ensures cell division at the proper site by restricting the formation of a division septum at the midpoint of the long axis of the cell. This is Cell division topological specificity factor from Stutzerimonas stutzeri (strain A1501) (Pseudomonas stutzeri).